The sequence spans 140 residues: Sperm protein associated with the nucleus on the X chromosome N3 (140 aa).

Polar residues-rich tracts occupy residues 1-20 (MEQP…CKSN), 62-79 (INSN…SINP), and 131-140 (EGSSQDSGED). Residues 1–140 (MEQPTSSTNG…EGSSQDSGED (140 aa)) form a disordered region.

Belongs to the SPAN-X family.

This chain is Sperm protein associated with the nucleus on the X chromosome N3 (SPANXN3), found in Pan troglodytes (Chimpanzee).